The primary structure comprises 357 residues: Protein NDRG2 (357 aa).

Positions 1–14 are enriched in basic and acidic residues; the sequence is MAELREVQITEEKP. Positions 1–26 are disordered; that stretch reads MAELREVQITEEKPLLPGQTPEVAKT. Position 2 is an N-acetylalanine (Ala2). Phosphothreonine is present on Thr20. Ser312 and Ser314 each carry phosphoserine. Position 316 is a phosphothreonine (Thr316). Phosphoserine is present on Ser318. Thr320 is subject to Phosphothreonine. The disordered stretch occupies residues 320–357; sequence TSAASIDGNRSRSRTLSQSSESGTLSSGPPGHTMEVSC. Ser321, Ser324, and Ser330 each carry phosphoserine. Residues 333–347 show a composition bias toward low complexity; the sequence is RTLSQSSESGTLSSG. At Thr334 the chain carries Phosphothreonine. Phosphoserine occurs at positions 336, 338, 339, and 341. Thr343 bears the Phosphothreonine mark. Phosphoserine is present on Ser356.

It belongs to the NDRG family. As to quaternary structure, interacts with CTNNB1.

Its subcellular location is the cytoplasm. It is found in the perinuclear region. It localises to the cell projection. The protein localises to the growth cone. Contributes to the regulation of the Wnt signaling pathway. Down-regulates CTNNB1-mediated transcriptional activation of target genes, such as CCND1, and may thereby act as tumor suppressor. May be involved in dendritic cell and neuron differentiation. The protein is Protein NDRG2 (NDRG2) of Bos taurus (Bovine).